We begin with the raw amino-acid sequence, 427 residues long: Enolase (427 aa).

(2R)-2-phosphoglycerate is bound at residue glutamine 163. The Proton donor role is filled by glutamate 205. Mg(2+) contacts are provided by aspartate 242, glutamate 285, and aspartate 312. Positions 337, 366, 367, and 388 each coordinate (2R)-2-phosphoglycerate. Lysine 337 functions as the Proton acceptor in the catalytic mechanism.

The protein belongs to the enolase family. The cofactor is Mg(2+).

It localises to the cytoplasm. It is found in the secreted. The protein localises to the cell surface. The enzyme catalyses (2R)-2-phosphoglycerate = phosphoenolpyruvate + H2O. The protein operates within carbohydrate degradation; glycolysis; pyruvate from D-glyceraldehyde 3-phosphate: step 4/5. Its function is as follows. Catalyzes the reversible conversion of 2-phosphoglycerate (2-PG) into phosphoenolpyruvate (PEP). It is essential for the degradation of carbohydrates via glycolysis. This chain is Enolase, found in Thiobacillus denitrificans (strain ATCC 25259 / T1).